The primary structure comprises 417 residues: Protein translocase subunit SecD (417 aa).

A run of 6 helical transmembrane segments spans residues 9 to 29, 236 to 256, 258 to 278, 288 to 308, 333 to 353, and 360 to 380; these read LLVSVLAIVIAFAVFIKPLVS, ASMKAFAIGLAGVFLFMLLYY, LSGLVADIVLLLYTLLLLAVM, PGMAGIILSIGMAVDANVLIF, FTTILDSNVTTLMAAAVLFYL, and GFAVTLALGVLISMFTAVTVT.

The protein belongs to the SecD/SecF family. SecD subfamily. In terms of assembly, forms a complex with SecF. Part of the essential Sec protein translocation apparatus which comprises SecA, SecYEG and auxiliary proteins SecDF. Other proteins may also be involved.

The protein localises to the cell membrane. Its function is as follows. Part of the Sec protein translocase complex. Interacts with the SecYEG preprotein conducting channel. SecDF uses the proton motive force (PMF) to complete protein translocation after the ATP-dependent function of SecA. This is Protein translocase subunit SecD from Acidaminococcus fermentans (strain ATCC 25085 / DSM 20731 / CCUG 9996 / CIP 106432 / VR4).